We begin with the raw amino-acid sequence, 367 residues long: Queuine tRNA-ribosyltransferase (367 aa).

Asp-92 acts as the Proton acceptor in catalysis. Substrate-binding positions include 92 to 96 (DSGGF), Asp-146, Gln-188, and Gly-215. An RNA binding region spans residues 246 to 252 (GVGTPKD). Asp-265 serves as the catalytic Nucleophile. Zn(2+) is bound by residues Cys-303, Cys-305, Cys-308, and His-334.

It belongs to the queuine tRNA-ribosyltransferase family. Homodimer. Within each dimer, one monomer is responsible for RNA recognition and catalysis, while the other monomer binds to the replacement base PreQ1. It depends on Zn(2+) as a cofactor.

The enzyme catalyses 7-aminomethyl-7-carbaguanine + guanosine(34) in tRNA = 7-aminomethyl-7-carbaguanosine(34) in tRNA + guanine. Its pathway is tRNA modification; tRNA-queuosine biosynthesis. Its function is as follows. Catalyzes the base-exchange of a guanine (G) residue with the queuine precursor 7-aminomethyl-7-deazaguanine (PreQ1) at position 34 (anticodon wobble position) in tRNAs with GU(N) anticodons (tRNA-Asp, -Asn, -His and -Tyr). Catalysis occurs through a double-displacement mechanism. The nucleophile active site attacks the C1' of nucleotide 34 to detach the guanine base from the RNA, forming a covalent enzyme-RNA intermediate. The proton acceptor active site deprotonates the incoming PreQ1, allowing a nucleophilic attack on the C1' of the ribose to form the product. After dissociation, two additional enzymatic reactions on the tRNA convert PreQ1 to queuine (Q), resulting in the hypermodified nucleoside queuosine (7-(((4,5-cis-dihydroxy-2-cyclopenten-1-yl)amino)methyl)-7-deazaguanosine). This is Queuine tRNA-ribosyltransferase from Francisella tularensis subsp. holarctica (strain FTNF002-00 / FTA).